Here is a 130-residue protein sequence, read N- to C-terminus: Small ribosomal subunit protein uS8 (130 aa).

This sequence belongs to the universal ribosomal protein uS8 family. As to quaternary structure, part of the 30S ribosomal subunit. Contacts proteins S5 and S12.

Its function is as follows. One of the primary rRNA binding proteins, it binds directly to 16S rRNA central domain where it helps coordinate assembly of the platform of the 30S subunit. The polypeptide is Small ribosomal subunit protein uS8 (Idiomarina loihiensis (strain ATCC BAA-735 / DSM 15497 / L2-TR)).